The following is a 782-amino-acid chain: E3 UFM1-protein ligase 1 homolog (782 aa).

The disordered stretch occupies residues 404 to 477; it reads NASTQELEDD…GSRGGGGVNK (74 aa). Basic residues predominate over residues 443–453; the sequence is KSTKKHQRGKA.

This sequence belongs to the UFL1 family.

In terms of biological role, E3 UFM1-protein ligase that mediates ufmylation of target proteins. This is E3 UFM1-protein ligase 1 homolog from Drosophila erecta (Fruit fly).